Consider the following 266-residue polypeptide: Protein PYRICULARIA ORYZAE RESISTANCE 21 (266 aa).

In terms of domain architecture, HMA spans 1-68 (MGILVILVDL…IWCKAGKIIK (68 aa)). Residues cysteine 12 and cysteine 15 each contribute to the a metal cation site. The segment at 129–156 (CEKPKPCEKPPPCKPEEPPKPPPEKPPP) is disordered. Over residues 142 to 156 (KPEEPPKPPPEKPPP) the composition is skewed to basic and acidic residues.

In terms of biological role, involved in defense responses. Contributes to slowing defense responses toward Magnaporthe oryzae. The sequence is that of Protein PYRICULARIA ORYZAE RESISTANCE 21 from Oryza sativa subsp. japonica (Rice).